The sequence spans 303 residues: Cytosolic Fe-S cluster assembly factor CFD1 (303 aa).

Residue 15–22 (GKGGVGKS) participates in ATP binding. 2 residues coordinate [4Fe-4S] cluster: Cys199 and Cys202.

Belongs to the Mrp/NBP35 ATP-binding proteins family. NUBP2/CFD1 subfamily. Heterotetramer of 2 NBP35 and 2 CFD1 chains. The cofactor is [4Fe-4S] cluster.

The protein resides in the cytoplasm. Its function is as follows. Component of the cytosolic iron-sulfur (Fe/S) protein assembly (CIA) machinery. Required for maturation of extramitochondrial Fe-S proteins. The NBP35-CFD1 heterotetramer forms a Fe-S scaffold complex, mediating the de novo assembly of an Fe-S cluster and its transfer to target apoproteins. The chain is Cytosolic Fe-S cluster assembly factor CFD1 from Chaetomium globosum (strain ATCC 6205 / CBS 148.51 / DSM 1962 / NBRC 6347 / NRRL 1970) (Soil fungus).